The primary structure comprises 289 residues: Diaminopimelate epimerase (289 aa).

Substrate is bound by residues Asn13, Gln47, and Asn67. The active-site Proton donor is Cys76. Residues 77 to 78 (GN), Asn167, Asn200, and 218 to 219 (ER) each bind substrate. The active-site Proton acceptor is the Cys227. Residue 228–229 (GT) participates in substrate binding.

It belongs to the diaminopimelate epimerase family. Homodimer.

It is found in the cytoplasm. The enzyme catalyses (2S,6S)-2,6-diaminopimelate = meso-2,6-diaminopimelate. The protein operates within amino-acid biosynthesis; L-lysine biosynthesis via DAP pathway; DL-2,6-diaminopimelate from LL-2,6-diaminopimelate: step 1/1. Catalyzes the stereoinversion of LL-2,6-diaminopimelate (L,L-DAP) to meso-diaminopimelate (meso-DAP), a precursor of L-lysine and an essential component of the bacterial peptidoglycan. The polypeptide is Diaminopimelate epimerase (Burkholderia pseudomallei (strain 668)).